The sequence spans 468 residues: Plant UBX domain-containing protein 7 (468 aa).

N-acetylmethionine is present on Met1. Residues 7–48 enclose the UBA-like domain; sequence SGDQQRLVSSFLEIAVGQTAETARQFLQATSWKLEEAIQLFY. Disordered regions lie at residues 138–168 and 299–329; these read KSPGIWEPDEGDSSASASASASASESASAPR and HFASLSKKRPRGSFSLTPHSKPKEDVAKDEE. A compositionally biased stretch (low complexity) spans 150-166; that stretch reads SSASASASASASESASA. Residues 328 to 347 enclose the UIM domain; it reads EEEEELQRALAASLEDNNMK. Positions 385-466 constitute a UBX domain; it reads DRSLQCRVGI…GVANSMISAT (82 aa).

Interacts with CDC48A via its UBX domain and with ubiquitin via its N-terminal UBA-like domain. As to expression, expressed broadly in sporophyte and gametophyte cells.

The protein resides in the nucleus. In terms of biological role, acts as a bridge between CDC48A and ubiquitin, suggesting a role in targeted protein degradation. The protein is Plant UBX domain-containing protein 7 of Arabidopsis thaliana (Mouse-ear cress).